The sequence spans 615 residues: Medium-chain acyl-CoA ligase ACSF2, mitochondrial (615 aa).

A mitochondrion-targeting transit peptide spans 1–41 (MAVYVGMLRLGRLCAGSSGVLGARAALSRSWQEARLQGVRF). An N6-acetyllysine modification is found at Lys-179. An N6-acetyllysine; alternate modification is found at Lys-182. The residue at position 182 (Lys-182) is an N6-succinyllysine; alternate. 263–271 (TSGTTGSPK) serves as a coordination point for ATP. N6-acetyllysine is present on residues Lys-340 and Lys-398. An N6-succinyllysine modification is found at Lys-478. The ATP site is built by Asp-493 and Arg-508. Position 510 is an N6-acetyllysine (Lys-510). N6-acetyllysine; alternate is present on residues Lys-544 and Lys-570. Lys-544 and Lys-570 each carry N6-succinyllysine; alternate. Lys-599 is an ATP binding site. The residue at position 599 (Lys-599) is an N6-succinyllysine.

This sequence belongs to the ATP-dependent AMP-binding enzyme family.

The protein localises to the mitochondrion. The enzyme catalyses a medium-chain fatty acid + ATP + CoA = a medium-chain fatty acyl-CoA + AMP + diphosphate. The catalysed reaction is octanoate + ATP + CoA = octanoyl-CoA + AMP + diphosphate. In terms of biological role, acyl-CoA synthases catalyze the initial reaction in fatty acid metabolism, by forming a thioester with CoA. Has some preference toward medium-chain substrates. Plays a role in adipocyte differentiation. This Homo sapiens (Human) protein is Medium-chain acyl-CoA ligase ACSF2, mitochondrial.